The sequence spans 224 residues: Charged multivesicular body protein 4c (224 aa).

2 disordered regions span residues 1 to 21 (MSVF…PTPQ) and 182 to 224 (SGPE…AWAM). Positions 7-17 (LFGGGGKGGKG) are enriched in gly residues. Positions 21–221 (QEAIQKLRET…DEDDMEELKA (201 aa)) form a coiled coil.

It belongs to the SNF7 family. As to quaternary structure, probable core component of the endosomal sorting required for transport complex III (ESCRT-III). ESCRT-III components are thought to multimerize to form a flat lattice on the perimeter membrane of the endosome.

It localises to the cytoplasm. It is found in the cytosol. The protein localises to the late endosome membrane. Its function is as follows. Probable core component of the endosomal sorting required for transport complex III (ESCRT-III) which is involved in multivesicular bodies (MVBs) formation and sorting of endosomal cargo proteins into MVBs. MVBs contain intraluminal vesicles (ILVs) that are generated by invagination and scission from the limiting membrane of the endosome and mostly are delivered to lysosomes enabling degradation of membrane proteins, such as stimulated growth factor receptors, lysosomal enzymes and lipids. Key component of the cytokinesis checkpoint, a process required to delay abscission to prevent both premature resolution of intercellular chromosome bridges and accumulation of DNA damage. In Danio rerio (Zebrafish), this protein is Charged multivesicular body protein 4c (chmp4c).